A 76-amino-acid chain; its full sequence is Waprin-Rha1 (76 aa).

A signal peptide spans 1 to 24 (MQARVFLLLLGVILLGMMGPMVSA). The WAP domain occupies 25–75 (QDGKAGSCPDVNQPIPPLGVCKTTCATDSNCPDIQKCCKNGCGHMSCTRPS). Cystine bridges form between C32–C62, C45–C66, C49–C61, and C55–C71.

This sequence belongs to the venom waprin family. In terms of tissue distribution, expressed by the venom gland.

Its subcellular location is the secreted. Its function is as follows. Damages membranes of susceptible bacteria. Has no hemolytic activity. Not toxic to mice. Does not inhibit the proteinases elastase and cathepsin G. The sequence is that of Waprin-Rha1 from Rhabdophis tigrinus tigrinus (Tiger keelback snake).